The sequence spans 272 residues: HMP-PP phosphatase (272 aa).

Asp-8 acts as the Nucleophile in catalysis. Mg(2+)-binding residues include Asp-8, Asp-10, and Asp-212.

Belongs to the HAD-like hydrolase superfamily. Cof family. Requires Mg(2+) as cofactor.

The catalysed reaction is 4-amino-2-methyl-5-(diphosphooxymethyl)pyrimidine + H2O = 4-amino-2-methyl-5-(phosphooxymethyl)pyrimidine + phosphate + H(+). In terms of biological role, catalyzes the hydrolysis of 4-amino-2-methyl-5-hydroxymethylpyrimidine pyrophosphate (HMP-PP) to 4-amino-2-methyl-5-hydroxymethylpyrimidine phosphate (HMP-P). The sequence is that of HMP-PP phosphatase from Enterobacter sp. (strain 638).